Here is a 1034-residue protein sequence, read N- to C-terminus: DNA polymerase I B, chloroplastic/mitochondrial (1034 aa).

Residues 1–55 (MGVSLRHLSPSSFWVSRRPRVSSSILSFLVPRRRILCTRKVAIIKGNAGYSTATD) constitute a chloroplast and mitochondrion transit peptide. The 199-residue stretch at 270–468 (ACDTEVSRID…LYESMKKQLQ (199 aa)) folds into the 3'-5' exonuclease domain. The tract at residues 700–1030 (HAIAALCEVC…SVDAKCAQNW (331 aa)) is polymerase.

The protein belongs to the DNA polymerase type-A family. Expressed in shoot apical meristem.

It localises to the mitochondrion. The protein localises to the plastid. The protein resides in the chloroplast. It catalyses the reaction DNA(n) + a 2'-deoxyribonucleoside 5'-triphosphate = DNA(n+1) + diphosphate. With respect to regulation, not inhibited by aphidicolin. In addition to polymerase activity, this DNA polymerase exhibits 5'-3' exonuclease activity. Required for DNA replication and accumulation in plastids and mitochondria. This is DNA polymerase I B, chloroplastic/mitochondrial (POLIB) from Arabidopsis thaliana (Mouse-ear cress).